The sequence spans 500 residues: Mannan polymerase II complex ANP1 subunit (500 aa).

Residues 1–15 (MKYNNRKLSFNPTTV) lie on the Cytoplasmic side of the membrane. A helical; Signal-anchor for type II membrane protein membrane pass occupies residues 16-27 (SIAGTLLTVFFL). At 28–500 (TRLVLSFFSI…VPLDFDPDRN (473 aa)) the chain is on the lumenal side. Residues 424 to 500 (WSEEGDGSEL…VPLDFDPDRN (77 aa)) are disordered. Positions 446–467 (QQQQQQQQQQQQQQQQQQQQQQ) are enriched in low complexity. A compositionally biased stretch (basic and acidic residues) spans 489–500 (KEVPLDFDPDRN).

It belongs to the ANP1/MMN9/VAN1 family. Component of the M-Pol II complex composed of ANP1, MNN9, MNN10, MNN11 and HOC1.

It localises to the endoplasmic reticulum membrane. It is found in the golgi apparatus membrane. Its function is as follows. Involved in the organization of the secretory pathway. Required to maintain a functional Golgi apparatus. Functionally, the M-Pol II complex possesses alpha-1,6-mannosyltransferase activity and is probably involved in the elongation of the mannan backbone of N-linked glycans on cell wall and periplasmic proteins. In Saccharomyces cerevisiae (strain ATCC 204508 / S288c) (Baker's yeast), this protein is Mannan polymerase II complex ANP1 subunit (ANP1).